The following is a 78-amino-acid chain: RRINNDCQNFIGNRAMYEKVDWICKDCANIFRKDGLLNNCRSNCFYNTEFLWCIDATENTRNKEQLEQWAAILGAGWN.

3 disulfides stabilise this stretch: Cys7/Cys44, Cys24/Cys40, and Cys27/Cys53.

The protein belongs to the arthropod CHH/MIH/GIH/VIH hormone family. As to expression, produced by the medulla terminalis X-organ in the eyestalks and transported to the sinus gland where it is stored and released.

It is found in the secreted. Represses the synthesis of methyl farnesoate, the precursor of insect juvenile hormone III in the mandibular organ. In Cancer pagurus (Rock crab), this protein is Mandibular organ-inhibiting hormone 1.